A 418-amino-acid chain; its full sequence is Metacaspase-2 (418 aa).

Residues 68 to 113 (PSPYTHAPHAPSPFNHAPPDSYPFTHAPPASSPFNHAPPGPPPPVH) form a disordered region. The span at 70 to 80 (PYTHAPHAPSP) shows a compositional bias: low complexity. Residues 103 to 112 (HAPPGPPPPV) show a composition bias toward pro residues. Catalysis depends on residues His-200 and Cys-256. The interval 385 to 406 (PDEEEEVNQAPQKTQEPQLSAN) is disordered. The span at 393–405 (QAPQKTQEPQLSA) shows a compositional bias: polar residues.

The protein belongs to the peptidase C14B family.

Its function is as follows. Acts as a negative regulator of oxidative stress cell death and hypersensitive cell death response mediated by immune response. Acts via indirect or direct regulation of AMC1 at postranscriptional level. This is Metacaspase-2 (AMC2) from Arabidopsis thaliana (Mouse-ear cress).